Reading from the N-terminus, the 422-residue chain is Probable glycosidase CRR1 (422 aa).

A signal peptide spans 1–20 (MRISILQLVPVVGYIGFALG). A GH16 domain is found at 67–339 (DEESCAPIPA…WENSPDIIEK (273 aa)). The active-site Nucleophile is the Glu217. The active-site Proton donor is Glu221.

It belongs to the glycosyl hydrolase 16 family. CRR1 subfamily.

Its subcellular location is the spore wall. Its function is as follows. Spore specific glycosidase involved in spore wall assembly during sporulation. May be involved in copper import. The chain is Probable glycosidase CRR1 (CRR1) from Saccharomyces cerevisiae (strain ATCC 204508 / S288c) (Baker's yeast).